The primary structure comprises 630 residues: Cytochrome B pre-mRNA-processing protein 2 (630 aa).

It is found in the mitochondrion. Functionally, appears to be specifically required for the splicing of the terminal intron (bI5) of the cytochrome b pre-mRNA. Can also stimulates the splicing of the omega intron of the precursor of large ribosomal RNA. The protein is Cytochrome B pre-mRNA-processing protein 2 (CBP2) of Saccharomyces cerevisiae (strain ATCC 204508 / S288c) (Baker's yeast).